We begin with the raw amino-acid sequence, 428 residues long: Gamma-glutamyl phosphate reductase (428 aa).

It belongs to the gamma-glutamyl phosphate reductase family.

Its subcellular location is the cytoplasm. It catalyses the reaction L-glutamate 5-semialdehyde + phosphate + NADP(+) = L-glutamyl 5-phosphate + NADPH + H(+). Its pathway is amino-acid biosynthesis; L-proline biosynthesis; L-glutamate 5-semialdehyde from L-glutamate: step 2/2. Its function is as follows. Catalyzes the NADPH-dependent reduction of L-glutamate 5-phosphate into L-glutamate 5-semialdehyde and phosphate. The product spontaneously undergoes cyclization to form 1-pyrroline-5-carboxylate. This Chelativorans sp. (strain BNC1) protein is Gamma-glutamyl phosphate reductase.